Consider the following 255-residue polypeptide: 5'-nucleotidase SurE (255 aa).

Positions 8, 9, 40, and 93 each coordinate a divalent metal cation.

It belongs to the SurE nucleotidase family. It depends on a divalent metal cation as a cofactor.

The protein resides in the cytoplasm. The catalysed reaction is a ribonucleoside 5'-phosphate + H2O = a ribonucleoside + phosphate. Its function is as follows. Nucleotidase that shows phosphatase activity on nucleoside 5'-monophosphates. This chain is 5'-nucleotidase SurE, found in Nitrobacter winogradskyi (strain ATCC 25391 / DSM 10237 / CIP 104748 / NCIMB 11846 / Nb-255).